Reading from the N-terminus, the 534-residue chain is Probable DNA ligase (534 aa).

Glu-213 serves as a coordination point for ATP. The active-site N6-AMP-lysine intermediate is the Lys-215. 6 residues coordinate ATP: Arg-220, Arg-235, Glu-264, Phe-303, Arg-375, and Lys-381.

The protein belongs to the ATP-dependent DNA ligase family. Mg(2+) serves as cofactor.

The enzyme catalyses ATP + (deoxyribonucleotide)n-3'-hydroxyl + 5'-phospho-(deoxyribonucleotide)m = (deoxyribonucleotide)n+m + AMP + diphosphate.. DNA ligase that seals nicks in double-stranded DNA during DNA replication, DNA recombination and DNA repair. In Mycolicibacterium vanbaalenii (strain DSM 7251 / JCM 13017 / BCRC 16820 / KCTC 9966 / NRRL B-24157 / PYR-1) (Mycobacterium vanbaalenii), this protein is Probable DNA ligase.